Here is a 344-residue protein sequence, read N- to C-terminus: Cell adhesion molecule CEACAM6 (344 aa).

An N-terminal signal peptide occupies residues 1 to 34 (MGPPSAPPCRLHVPWKEVLLTASLLTFWNPPTTA). Residues 35 to 142 (KLTIESTPFN…EATGQFHVYP (108 aa)) enclose the Ig-like V-type domain. N-linked (GlcNAc...) asparagine glycosylation is found at Asn-104, Asn-111, Asn-115, Asn-152, Asn-173, Asn-197, Asn-224, Asn-256, Asn-274, Asn-288, Asn-292, and Asn-309. 2 consecutive Ig-like C2-type domains span residues 145 to 232 (PKPS…VTLN) and 240 to 314 (PTIS…TTVT). A disulfide bridge connects residues Cys-167 and Cys-215. Cysteines 259 and 299 form a disulfide. Gly-320 carries the GPI-anchor amidated glycine lipid modification. A propeptide spans 321 to 344 (SAPVLSAVATVGITIGVLARVALI) (removed in mature form).

The protein belongs to the immunoglobulin superfamily. CEA family. Homodimer; homodimerizes via its Ig-like V-type domain. Heterodimer with CEACAM8; heterodimerizes via its Ig-like V-type domain. Post-translationally, glycosylated. As to expression, expressed in neutrophils. Expressed in columnar epithelial and goblet cells of the colon. Expressed in numerous tumor cell lines (at protein level).

The protein resides in the cell membrane. It is found in the apical cell membrane. Its subcellular location is the cell surface. Cell surface glycoprotein that plays a role in cell adhesion and tumor progression. Intercellular adhesion occurs in a calcium- and fibronectin-independent manner. Mediates homophilic and heterophilic cell adhesion with other carcinoembryonic antigen-related cell adhesion molecules, such as CEACAM5 and CEACAM8. Heterophilic interaction with CEACAM8 occurs in activated neutrophils. Plays a role in neutrophil adhesion to cytokine-activated endothelial cells. Plays a role in cell migration and cell adhesion to endothelial cells. The chain is Cell adhesion molecule CEACAM6 from Homo sapiens (Human).